A 289-amino-acid chain; its full sequence is MSKIPLAVRIGLGRLNVTNLLRSRAMTQYHSKPVSEHGHIDWDQDEHAVWHELITRQQEVVKTRACQAYLDGLNMLNLPTDRLPQLPEINRVLQRETGWQVEPVPALISFDRFFALLADKKFPVATFLRRREEFDYLQEPDFFHEVYGHCAMLTHPDFAAFTHVYGQLGAKATPKERSYLARLYWFTVEFGLVQEQGQTKIYGGGILSSPGETLYASESTIPKREPFDIMQVLRTPYRIDIMQPIYYVLPDLSQLYQLSQRDVMALVWQAMQDGLLPPLFQPKEQQHAG.

Fe cation contacts are provided by His144, His149, and Glu189.

The protein belongs to the biopterin-dependent aromatic amino acid hydroxylase family. The cofactor is Fe(2+).

The enzyme catalyses (6R)-L-erythro-5,6,7,8-tetrahydrobiopterin + L-phenylalanine + O2 = (4aS,6R)-4a-hydroxy-L-erythro-5,6,7,8-tetrahydrobiopterin + L-tyrosine. It participates in amino-acid degradation; L-phenylalanine degradation; acetoacetate and fumarate from L-phenylalanine: step 1/6. This chain is Phenylalanine-4-hydroxylase (phhA), found in Vibrio cholerae serotype O1 (strain ATCC 39315 / El Tor Inaba N16961).